The sequence spans 191 residues: Orotate phosphoribosyltransferase (191 aa).

114 to 122 (EDVVTTGKS) contacts 5-phospho-alpha-D-ribose 1-diphosphate. Positions 118 and 146 each coordinate orotate.

This sequence belongs to the purine/pyrimidine phosphoribosyltransferase family. PyrE subfamily. In terms of assembly, homodimer. Mg(2+) serves as cofactor.

It catalyses the reaction orotidine 5'-phosphate + diphosphate = orotate + 5-phospho-alpha-D-ribose 1-diphosphate. The protein operates within pyrimidine metabolism; UMP biosynthesis via de novo pathway; UMP from orotate: step 1/2. In terms of biological role, catalyzes the transfer of a ribosyl phosphate group from 5-phosphoribose 1-diphosphate to orotate, leading to the formation of orotidine monophosphate (OMP). This is Orotate phosphoribosyltransferase from Clostridium botulinum (strain Kyoto / Type A2).